Reading from the N-terminus, the 276-residue chain is Transmembrane protein 81 (276 aa).

A signal peptide spans 1-24 (MKTSATSFIPGSLVLAFCLPVVAT). Over 25–225 (SPKTLAIPEK…QHPPWKKKVA (201 aa)) the chain is Extracellular. The N-linked (GlcNAc...) asparagine glycan is linked to Asn45. Positions 83–176 (TNWLCGMLHF…NLRLVKRLYF (94 aa)) constitute an Ig-like domain. The cysteines at positions 104 and 160 are disulfide-linked. N-linked (GlcNAc...) asparagine glycosylation occurs at Asn211. Residues 226–246 (IAVGIGVAGGVTGGVLVSIVL) form a helical membrane-spanning segment. Topologically, residues 247 to 276 (CGRLSVIHSSASLETLQALLPKGGMLRKPD) are cytoplasmic.

In terms of assembly, forms a complex with IZUMO1 and SPACA6 on spermatocyte cell membrane required for fertilization.

It is found in the cell membrane. Functionally, essential fertilization factor required for male fertility. Part of a conserved trimeric sperm complex with the essential fertilization factors IZUMO1 and SPACA6 which bridges sperm and oocyte membranes during fertilization by binding to IZUMO1R/JUNO on the oocyte. In Bos taurus (Bovine), this protein is Transmembrane protein 81 (TMEM81).